We begin with the raw amino-acid sequence, 98 residues long: NADH-ubiquinone oxidoreductase chain 4L (98 aa).

The next 3 helical transmembrane spans lie at 1 to 21 (MMPINLNLIMAFSLALIGALV), 28 to 48 (STLLCLEGMMLSLFIQMALLI), and 59 to 79 (APLILLVFSACEAGLGLALLV).

The protein belongs to the complex I subunit 4L family. As to quaternary structure, core subunit of respiratory chain NADH dehydrogenase (Complex I) which is composed of 45 different subunits.

Its subcellular location is the mitochondrion inner membrane. The enzyme catalyses a ubiquinone + NADH + 5 H(+)(in) = a ubiquinol + NAD(+) + 4 H(+)(out). Functionally, core subunit of the mitochondrial membrane respiratory chain NADH dehydrogenase (Complex I) which catalyzes electron transfer from NADH through the respiratory chain, using ubiquinone as an electron acceptor. Part of the enzyme membrane arm which is embedded in the lipid bilayer and involved in proton translocation. This is NADH-ubiquinone oxidoreductase chain 4L (MT-ND4L) from Distoechurus pennatus (Feather-tailed possum).